The following is a 355-amino-acid chain: MNQPKSAPNSTDSAQGLSYRDAGVDIDAGDALVDAIKPFARKTMRDGVLGGIGGFGALFEVPKKYKEPVLVSGTDGVGTKLRLAFQLNKHDTVGQDLVAMSVNDILVQGAEPLFFLDYFACGKLDVGTAATVVKGIAYGCELSGCALIGGETAEMPGMYPDGEYDLAGFAVGAVEKSKIIDGSTIAPGDVVLGLASSGIHSNGFSLVRKIIERAQPDLNADFDGRSLADALMAPTHIYVKPLLALMQQIAVKGMAHITGGGLVENIPRVLREGLTAELDHRGWPLPPLFSWLQKHGGVADAEMHRVFNCGIGMAVVVSAADADAAIGLLSAAGEQVWKIGVIRESAAGEAQTVVI.

The protein belongs to the AIR synthase family.

The protein localises to the cytoplasm. The enzyme catalyses 2-formamido-N(1)-(5-O-phospho-beta-D-ribosyl)acetamidine + ATP = 5-amino-1-(5-phospho-beta-D-ribosyl)imidazole + ADP + phosphate + H(+). Its pathway is purine metabolism; IMP biosynthesis via de novo pathway; 5-amino-1-(5-phospho-D-ribosyl)imidazole from N(2)-formyl-N(1)-(5-phospho-D-ribosyl)glycinamide: step 2/2. This Paraburkholderia xenovorans (strain LB400) protein is Phosphoribosylformylglycinamidine cyclo-ligase.